Here is a 31-residue protein sequence, read N- to C-terminus: Malate dehydrogenase, mitochondrial (31 aa).

Residues 9–19 and 20–31 each bind NAD(+); these read GIGQPLSLLMK and DDLFNINAGIVK.

It belongs to the LDH/MDH superfamily. MDH type 1 family. Homodimer.

The protein resides in the mitochondrion matrix. The enzyme catalyses (S)-malate + NAD(+) = oxaloacetate + NADH + H(+). This is Malate dehydrogenase, mitochondrial from Imperata cylindrica (Cogon grass).